We begin with the raw amino-acid sequence, 1346 residues long: Cytokinesis protein sepH (1346 aa).

The segment at 1 to 50 is disordered; the sequence is MVSRSNEGPEAPHPASRTPGAPAKGRLTRLGSSPSKRDDKAKDDRMGKTS. Over residues 35–50 the composition is skewed to basic and acidic residues; that stretch reads SKRDDKAKDDRMGKTS. A Protein kinase domain is found at 60–310; it reads YQLGDCLGRG…ARKLLKHPWI (251 aa). ATP contacts are provided by residues 66–74 and K89; that span reads LGRGAFGSV. D182 (proton acceptor) is an active-site residue. Disordered stretches follow at residues 342–380, 446–497, and 1211–1295; these read RSPE…PSPV, DESF…HMRR, and LCKL…AGAS. Polar residues-rich tracts occupy residues 477 to 489 and 1220 to 1249; these read QQAN…SQNG and RGST…NQSK.

It belongs to the protein kinase superfamily. Ser/Thr protein kinase family. CDC7 subfamily. It depends on Mg(2+) as a cofactor.

The enzyme catalyses L-seryl-[protein] + ATP = O-phospho-L-seryl-[protein] + ADP + H(+). It catalyses the reaction L-threonyl-[protein] + ATP = O-phospho-L-threonyl-[protein] + ADP + H(+). Its function is as follows. Required for early events during cytokinesis including localization of cytoskeletal components to the cytokinetic ring. In Emericella nidulans (strain FGSC A4 / ATCC 38163 / CBS 112.46 / NRRL 194 / M139) (Aspergillus nidulans), this protein is Cytokinesis protein sepH.